A 285-amino-acid polypeptide reads, in one-letter code: GPN-loop GTPase 3 (285 aa).

13–18 (GSGKST) is a binding site for GTP. The Gly-Pro-Asn (GPN)-loop; involved in dimer interface signature appears at 70–72 (GPN). 172-175 (TKID) serves as a coordination point for GTP. The segment at 253-276 (GEDLEPKEPPLENDDDDDDDEGDE) is disordered. A compositionally biased stretch (acidic residues) spans 263 to 275 (LENDDDDDDDEGD).

This sequence belongs to the GPN-loop GTPase family. In terms of assembly, heterodimer with gpn1. Binds to RNA polymerase II (RNAPII).

Small GTPase required for proper localization of RNA polymerase II (RNAPII). May act at an RNAP assembly step prior to nuclear import. This chain is GPN-loop GTPase 3 (gpn3), found in Dictyostelium discoideum (Social amoeba).